We begin with the raw amino-acid sequence, 233 residues long: Putative cobalt transport protein CbiM (233 aa).

6 consecutive transmembrane segments (helical) span residues 9–29 (PPMW…YGIV), 43–63 (PLVA…MPSV), 75–95 (LGAV…VLLF), 107–127 (TLGA…VIVY), 138–158 (TVGI…TTAV), and 177–197 (IVIY…LTVI).

The protein belongs to the CbiM family. In terms of assembly, forms an energy-coupling factor (ECF) transporter complex composed of an ATP-binding protein (A component, CbiO), a transmembrane protein (T component, CbiQ) and 2 possible substrate-capture proteins (S components, CbiM and CbiN) of unknown stoichimetry.

Its subcellular location is the cell membrane. It functions in the pathway cofactor biosynthesis; adenosylcobalamin biosynthesis. In terms of biological role, part of the energy-coupling factor (ECF) transporter complex CbiMNOQ involved in cobalt import. The chain is Putative cobalt transport protein CbiM from Methanocaldococcus jannaschii (strain ATCC 43067 / DSM 2661 / JAL-1 / JCM 10045 / NBRC 100440) (Methanococcus jannaschii).